Here is an 808-residue protein sequence, read N- to C-terminus: Piwi-like protein 1 (808 aa).

Residues 214 to 333 (RINRVLNENN…IPGELCYLCG (120 aa)) enclose the PAZ domain. The segment at 300-322 (SMVRPKEKTENEPEGPTETDQSL) is disordered. A Piwi domain is found at 492–790 (HMALVFIPDD…LAELVGKIHR (299 aa)).

This sequence belongs to the argonaute family. Piwi subfamily. Expressed in dividing adult somatic stem cells (neoblasts).

In Schmidtea mediterranea (Freshwater planarian flatworm), this protein is Piwi-like protein 1 (wi-1).